Reading from the N-terminus, the 224-residue chain is Mannose-specific lectin 3 (224 aa).

2 consecutive Bulb-type lectin domains span residues asparagine 2–alanine 111 and arginine 117–threonine 222. 2 cysteine pairs are disulfide-bonded: cysteine 30/cysteine 52 and cysteine 145/cysteine 170.

In terms of assembly, heterotetramer of 2 domain 1 and 2 domain 2 chains arranged as a dimer of domain 1/domain 2 heterodimers.

Its function is as follows. Mannose-specific lectin. Has weak agglutinating activity towards trypsin-treated erythrocytes from rabbit but not from human. In Crocus vernus (Dutch crocus), this protein is Mannose-specific lectin 3.